The sequence spans 784 residues: ATP-dependent 6-phosphofructokinase, platelet type (784 aa).

Met1 is modified (N-acetylmethionine). The tract at residues 1–399 is N-terminal catalytic PFK domain 1; the sequence is MDADDSRAPK…NLNTYKRLAI (399 aa). Phosphoserine is present on residues Ser6, Ser12, and Ser21. ATP contacts are provided by residues Gly34, 97–98, and 127–130; these read RC and GDGS. Asp128 is a binding site for Mg(2+). Position 142 is a phosphoserine (Ser142). Substrate-binding positions include 173 to 175, Arg210, 217 to 219, Glu273, Arg301, and 307 to 310; these read SID, MGR, and HVQR. Residue Asp175 is the Proton acceptor of the active site. Phosphoserine is present on Ser386. Lys395 is modified (N6-acetyllysine). Residues 400 to 411 are interdomain linker; it reads KLPDDQIPKTNC. The tract at residues 412-784 is C-terminal regulatory PFK domain 2; it reads NVAVINVGAP…QLEHVQPWSV (373 aa). Arg481 lines the beta-D-fructose 2,6-bisphosphate pocket. At Lys486 the chain carries N6-acetyllysine. Beta-D-fructose 2,6-bisphosphate contacts are provided by residues 538-542, Arg576, 583-585, and Glu639; these read TVSNN and MGG. The O-linked (GlcNAc) serine glycan is linked to Ser540. Position 651 is a phosphotyrosine (Tyr651). Residues Arg665 and 671-674 each bind beta-D-fructose 2,6-bisphosphate; that span reads HMQQ. Lys688 is subject to N6-acetyllysine. Arg744 serves as a coordination point for beta-D-fructose 2,6-bisphosphate. Ser783 carries the post-translational modification Phosphoserine.

Belongs to the phosphofructokinase type A (PFKA) family. ATP-dependent PFK group I subfamily. Eukaryotic two domain clade 'E' sub-subfamily. In terms of assembly, homo- and heterotetramers. Phosphofructokinase (PFK) enzyme functions as a tetramer composed of different combinations of 3 types of subunits, called PFKM (where M stands for Muscle), PFKL (Liver) and PFKP (Platelet). The composition of the PFK tetramer differs according to the tissue type it is present in. In muscles, it is composed of 4 PFKM subunits (also called M4). In the liver, the predominant form is a tetramer of PFKL subunits (L4). In erythrocytes, both PFKM and PFKL subunits randomly tetramerize to form M4, L4 and other combinations (ML3, M2L2, M3L). In platelets, brain and fibroblasts, PFK contains a higher proportion of PFKP subunits. The kinetic and regulatory properties of the tetrameric enzyme are dependent on the subunit composition, hence can vary across tissues. Interacts with ATG4B; promoting phosphorylation of ATG4B. It depends on Mg(2+) as a cofactor. Post-translationally, phosphorylation at Ser-386 promotes interaction with ATG4B. In terms of processing, glcNAcylation decreases enzyme activity.

It localises to the cytoplasm. The catalysed reaction is beta-D-fructose 6-phosphate + ATP = beta-D-fructose 1,6-bisphosphate + ADP + H(+). It participates in carbohydrate degradation; glycolysis; D-glyceraldehyde 3-phosphate and glycerone phosphate from D-glucose: step 3/4. With respect to regulation, allosterically activated by ADP, AMP, or fructose 2,6-bisphosphate, and allosterically inhibited by ATP or citrate. Functionally, catalyzes the phosphorylation of D-fructose 6-phosphate to fructose 1,6-bisphosphate by ATP, the first committing step of glycolysis. This chain is ATP-dependent 6-phosphofructokinase, platelet type (PFKP), found in Homo sapiens (Human).